Consider the following 498-residue polypeptide: ATP synthase subunit beta, chloroplastic (498 aa).

172-179 (GGAGVGKT) provides a ligand contact to ATP.

Belongs to the ATPase alpha/beta chains family. As to quaternary structure, F-type ATPases have 2 components, CF(1) - the catalytic core - and CF(0) - the membrane proton channel. CF(1) has five subunits: alpha(3), beta(3), gamma(1), delta(1), epsilon(1). CF(0) has four main subunits: a(1), b(1), b'(1) and c(9-12).

The protein resides in the plastid. Its subcellular location is the chloroplast thylakoid membrane. The catalysed reaction is ATP + H2O + 4 H(+)(in) = ADP + phosphate + 5 H(+)(out). Its function is as follows. Produces ATP from ADP in the presence of a proton gradient across the membrane. The catalytic sites are hosted primarily by the beta subunits. The protein is ATP synthase subunit beta, chloroplastic of Nicotiana sylvestris (Wood tobacco).